The following is a 176-amino-acid chain: Peptidyl-prolyl cis-trans isomerase CYP19-3 (176 aa).

Positions 7–170 constitute a PPIase cyclophilin-type domain; sequence FFDILIGKMK…ERVVIEDCGE (164 aa).

This sequence belongs to the cyclophilin-type PPIase family. In terms of tissue distribution, ubiquitous, with highest levels in flowers and lowest levels in roots.

It is found in the cytoplasm. It carries out the reaction [protein]-peptidylproline (omega=180) = [protein]-peptidylproline (omega=0). Binds cyclosporin A (CsA). CsA mediates some of its effects via an inhibitory action on PPIase. PPIases accelerate the folding of proteins. It catalyzes the cis-trans isomerization of proline imidic peptide bonds in oligopeptides. In Arabidopsis thaliana (Mouse-ear cress), this protein is Peptidyl-prolyl cis-trans isomerase CYP19-3 (CYP19-3).